Here is a 195-residue protein sequence, read N- to C-terminus: Large ribosomal subunit protein uL18 (195 aa).

The protein belongs to the universal ribosomal protein uL18 family. Part of the 50S ribosomal subunit. Contacts the 5S and 23S rRNAs.

In terms of biological role, this is one of the proteins that bind and probably mediate the attachment of the 5S RNA into the large ribosomal subunit, where it forms part of the central protuberance. The sequence is that of Large ribosomal subunit protein uL18 from Korarchaeum cryptofilum (strain OPF8).